Consider the following 511-residue polypeptide: MEKLLALIVVLVILLSLALFYLCNILWLRAVKIRKKLRRQGIRGPKPTFLYGNTKEIKRIRQELKLSQKQGTNNFISTLFPHFLLWRETYGPVFLYSTGAMEILQVSHPDMVKDIGRWTPSELGKPNYLKKSRKALFGGGLFTENGDEWAYQRKIIAPEFFMDKIKGMIQLIEDATVPVLEAWEDMIDDEGGCREIVVDDYLRNLSADVIARACFGSSFTKGEEIFCKLRQLQKAIARQDSFVGLSALWKYLPTKSSQEIQMLDEQVRLLILDVAKEQHHYQDSHNSLVNAIIDGAQDGRSAAEAEDFIVGNCKTIYFGGHESTAVTAIWCLMLLATHPEWQERARAEAMEVCRGRSTLDVDALRRLKIVTMVIQETLRLYPPASVMMREALTDVKLGSIEVPRGTIVQVPRLMLHLDKEAWGADADEFRPDRFANGVAAACRAAHMYVPFGHGPRTCIGQNLAMAELKVVLARLLTKFAFSPSPRYRHSPAFRLTIEPGFGLPLMVTKLP.

Residues 1 to 6 (MEKLLA) lie on the Lumenal side of the membrane. A helical; Signal-anchor for type III membrane protein membrane pass occupies residues 7–27 (LIVVLVILLSLALFYLCNILW). Topologically, residues 28–511 (LRAVKIRKKL…GLPLMVTKLP (484 aa)) are cytoplasmic. Heme is bound at residue Cys-458.

This sequence belongs to the cytochrome P450 family. It depends on heme as a cofactor.

The protein localises to the membrane. The protein is Cytochrome P450 714C3 (CYP714C3) of Oryza sativa subsp. japonica (Rice).